We begin with the raw amino-acid sequence, 88 residues long: MPRPALRSRSLRRVYVKLPSGKTVIHYERKRNDIAICAICKKPLHGVKTNFLHKYSKSEKRPERPFGGYLCSSCLTQLIKATVRQQLQ.

This sequence belongs to the eukaryotic ribosomal protein eL34 family.

In Saccharolobus solfataricus (strain ATCC 35092 / DSM 1617 / JCM 11322 / P2) (Sulfolobus solfataricus), this protein is Large ribosomal subunit protein eL34.